The following is a 208-amino-acid chain: Uracil phosphoribosyltransferase (208 aa).

5-phospho-alpha-D-ribose 1-diphosphate is bound by residues arginine 78, arginine 103, and 130–138; that span reads DPMLATGHS. Residues isoleucine 193 and 198-200 contribute to the uracil site; that span reads GDA. 5-phospho-alpha-D-ribose 1-diphosphate is bound at residue aspartate 199.

Belongs to the UPRTase family. Requires Mg(2+) as cofactor.

The enzyme catalyses UMP + diphosphate = 5-phospho-alpha-D-ribose 1-diphosphate + uracil. The protein operates within pyrimidine metabolism; UMP biosynthesis via salvage pathway; UMP from uracil: step 1/1. Its activity is regulated as follows. Allosterically activated by GTP. Functionally, catalyzes the conversion of uracil and 5-phospho-alpha-D-ribose 1-diphosphate (PRPP) to UMP and diphosphate. This chain is Uracil phosphoribosyltransferase, found in Brucella anthropi (strain ATCC 49188 / DSM 6882 / CCUG 24695 / JCM 21032 / LMG 3331 / NBRC 15819 / NCTC 12168 / Alc 37) (Ochrobactrum anthropi).